A 957-amino-acid chain; its full sequence is Glycine dehydrogenase (decarboxylating) (957 aa).

Position 708 is an N6-(pyridoxal phosphate)lysine (Lys-708).

The protein belongs to the GcvP family. The glycine cleavage system is composed of four proteins: P, T, L and H. The cofactor is pyridoxal 5'-phosphate.

The enzyme catalyses N(6)-[(R)-lipoyl]-L-lysyl-[glycine-cleavage complex H protein] + glycine + H(+) = N(6)-[(R)-S(8)-aminomethyldihydrolipoyl]-L-lysyl-[glycine-cleavage complex H protein] + CO2. The glycine cleavage system catalyzes the degradation of glycine. The P protein binds the alpha-amino group of glycine through its pyridoxal phosphate cofactor; CO(2) is released and the remaining methylamine moiety is then transferred to the lipoamide cofactor of the H protein. This Enterobacter sp. (strain 638) protein is Glycine dehydrogenase (decarboxylating).